A 328-amino-acid chain; its full sequence is Homeobox protein Hox-C13 (328 aa).

The disordered stretch occupies residues 23–48 (AAESGSGGGGGGGGAGGAGGGCSGAS). The segment covering 27 to 45 (GSGGGGGGGGAGGAGGGCS) has biased composition (gly residues). A DNA-binding region (homeobox) is located at residues 258-317 (GRKKRVPYTKVQLKELEKEYAASKFITKEKRRRISATTNLSERQVTIWFQNRRVKEKKVV).

Belongs to the Abd-B homeobox family. As to expression, expressed in differentiating keratinocytes. In the hair follicle lower matrix, expressed in all 3 hair shaft-forming compartments, i.e. cuticle, cortex and medulla. Expression stops sharply at the boundary with the germinal matrix compartment.

Its subcellular location is the nucleus. Its function is as follows. Transcription factor which plays a role in hair follicle differentiation. Regulates FOXQ1 expression and that of other hair-specific genes. The chain is Homeobox protein Hox-C13 (Hoxc13) from Mus musculus (Mouse).